We begin with the raw amino-acid sequence, 927 residues long: Transmembrane protein 132 homolog (927 aa).

The signal sequence occupies residues 1–18; that stretch reads MLKKLWICISCIVTTALS. A helical transmembrane segment spans residues 749–769; the sequence is FHIFVLTIIGLIILFLFISFV. The tract at residues 789–842 is disordered; the sequence is LSSSSGSNSRQEETNEWVWLSQPQPPSSTISSGYSGNKSTAERQSSNGDDPSRT. The span at 817-842 shows a compositional bias: polar residues; sequence TISSGYSGNKSTAERQSSNGDDPSRT.

This sequence belongs to the TMEM132 family. As to quaternary structure, interacts with gex-3. As to expression, specifically expressed in neurons.

It is found in the membrane. Functionally, regulates neuronal morphology via inhibition of the WAVE regulatory complex (WCR), a complex that controls F-actin cytoskeletal dynamics. In Caenorhabditis elegans, this protein is Transmembrane protein 132 homolog.